A 398-amino-acid chain; its full sequence is Stomatin-like protein 1 (398 aa).

The short motif at 6 to 10 is the Tyrosine-type lysosomal sorting signal element; it reads GYRAL. A Phosphoserine modification is found at serine 28. The chain crosses the membrane as a helical; Signal-anchor for type III membrane protein span at residues 58-78; sequence LISFLGFLLLLVTFPISGWFA. The Cytoplasmic portion of the chain corresponds to 79 to 398; sequence LKIVPTYERM…KLEAVLRALK (320 aa). The SCP2 domain maps to 287-398; sequence KQPLAEGLLT…KLEAVLRALK (112 aa).

It belongs to the band 7/mec-2 family. As to quaternary structure, interacts with STOM; may redistribute STOM from the plasma membrane to late endosomes. Interacts with FBXW7 isoform 3 and CDK2. Ubiquitously expressed at low levels. Expression is highest in brain.

The protein localises to the membrane. It localises to the late endosome membrane. Its subcellular location is the membrane raft. The protein resides in the cell membrane. It is found in the cytoplasmic vesicle. In terms of biological role, may play a role in cholesterol transfer to late endosomes. May play a role in modulating membrane acid-sensing ion channels. Can specifically inhibit proton-gated current of ASIC1 isoform 1. Can increase inactivation speed of ASIC3. May be involved in regulation of proton sensing in dorsal root ganglions. May play a role in protecting FBXW7 isoform 3 from degradation. The protein is Stomatin-like protein 1 (STOML1) of Homo sapiens (Human).